Consider the following 247-residue polypeptide: Neurotrophic factor BDNF precursor form (247 aa).

Positions 1–18 (MTILFLTMVISYFGCMKA) are cleaved as a signal peptide. The propeptide occupies 19-128 (APMKEANARG…AANMSMRVRR (110 aa)). Asparagine 121 is a glycosylation site (N-linked (GlcNAc...) asparagine). Disulfide bonds link cysteine 141/cysteine 208, cysteine 186/cysteine 237, and cysteine 196/cysteine 239.

The protein belongs to the NGF-beta family. In terms of assembly, monomers and homodimers. Binds to NTRK2/TRKB. Can form heterodimers with other neurotrophin family members, such as NTF3 and NTF4 (in vitro), but the physiological relevance of this is not clear. BDNF precursor form: interacts with the heterodimer formed by NGFR and SORCS2. Mature BDNF has much lower affinity for the heterodimer formed by NGFR and SORCS2. Post-translationally, N-glycosylated and glycosulfated, contrary to mature BDNF. Mature BDNF is produced by proteolytic removal of the propeptide, catalyzed by a FURIN family member. In addition, the precursor form is proteolytically cleaved within the propeptide, but this is not an obligatory intermediate for the production of mature BDNF. Can be converted into mature BDNF by plasmin (PLG).

The protein resides in the secreted. Functionally, important signaling molecule that activates signaling cascades downstream of NTRK2. During development, promotes the survival and differentiation of selected neuronal populations of the peripheral and central nervous systems. Participates in axonal growth, pathfinding and in the modulation of dendritic growth and morphology. Major regulator of synaptic transmission and plasticity at adult synapses in many regions of the CNS. The versatility of BDNF is emphasized by its contribution to a range of adaptive neuronal responses including long-term potentiation (LTP), long-term depression (LTD), certain forms of short-term synaptic plasticity, as well as homeostatic regulation of intrinsic neuronal excitability. Its function is as follows. Important signaling molecule that activates signaling cascades downstream of NTRK2. Activates signaling cascades via the heterodimeric receptor formed by NGFR and SORCS2. Signaling via NGFR and SORCS2 plays a role in synaptic plasticity and long-term depression (LTD). Binding to NGFR and SORCS2 promotes neuronal apoptosis. Promotes neuronal growth cone collapse. This Equus caballus (Horse) protein is Neurotrophic factor BDNF precursor form (BDNF).